The following is a 210-amino-acid chain: Riboflavin kinase (210 aa).

Residues 1–11 (MRPSNPRPPVT) show a composition bias toward pro residues. Residues 1 to 24 (MRPSNPRPPVTGPDSGPEAPFPIR) are disordered. Residues threonine 44 and asparagine 46 each contribute to the Mg(2+) site. The Nucleophile role is filled by glutamate 113.

Belongs to the flavokinase family. Zn(2+) is required as a cofactor. Mg(2+) serves as cofactor.

The catalysed reaction is riboflavin + ATP = FMN + ADP + H(+). It participates in cofactor biosynthesis; FMN biosynthesis; FMN from riboflavin (ATP route): step 1/1. Functionally, catalyzes the phosphorylation of riboflavin (vitamin B2) to form flavin mononucleotide (FMN) coenzyme. The polypeptide is Riboflavin kinase (fmn1) (Emericella nidulans (strain FGSC A4 / ATCC 38163 / CBS 112.46 / NRRL 194 / M139) (Aspergillus nidulans)).